The following is a 258-amino-acid chain: Phosphoadenosine 5'-phosphosulfate reductase (258 aa).

Residue Cys-244 is the Nucleophile; cysteine thiosulfonate intermediate of the active site.

The protein belongs to the PAPS reductase family. CysH subfamily.

It is found in the cytoplasm. The catalysed reaction is [thioredoxin]-disulfide + sulfite + adenosine 3',5'-bisphosphate + 2 H(+) = [thioredoxin]-dithiol + 3'-phosphoadenylyl sulfate. It functions in the pathway sulfur metabolism; hydrogen sulfide biosynthesis; sulfite from sulfate: step 3/3. Functionally, catalyzes the formation of sulfite from phosphoadenosine 5'-phosphosulfate (PAPS) using thioredoxin as an electron donor. The sequence is that of Phosphoadenosine 5'-phosphosulfate reductase from Vibrio vulnificus (strain YJ016).